The following is a 635-amino-acid chain: Probable ethylene response sensor 2 (635 aa).

The next 3 membrane-spanning stretches (helical) occupy residues I24–V44, F59–I79, and A94–L114. The Cu cation site is built by C66 and H70. A GAF domain is found at D159–L308. In terms of domain architecture, Histidine kinase spans V351–E589. Phosphohistidine; by autocatalysis is present on H354.

It belongs to the ethylene receptor family. In terms of assembly, homodimer. Cu cation serves as cofactor.

It is found in the endoplasmic reticulum membrane. The catalysed reaction is ATP + protein L-histidine = ADP + protein N-phospho-L-histidine.. In terms of biological role, ethylene receptor related to bacterial two-component regulators. Acts as a negative regulator of ethylene signaling. May play a role in the regulation of flowering by up-regulating GI (GIGANTEA) and RCN1 and regulate starch accumulation by down-regulating the alpha-amylase AMY3D. The sequence is that of Probable ethylene response sensor 2 (ERS2) from Oryza sativa subsp. japonica (Rice).